The following is a 20-amino-acid chain: GRNGKSQSIIVGPWGDRVTN.

The segment at 1–20 (GRNGKSQSIIVGPWGDRVTN) is disordered.

It belongs to the jacalin lectin family. In terms of assembly, formed of four alpha chains and four beta chains.

Its function is as follows. D-galactose-specific lectin, binds the T-antigen structure Gal-beta1,3-GalNAc. This is Agglutinin beta-2 chain from Maclura pomifera (Osage orange).